An 89-amino-acid chain; its full sequence is uncharacterized protein (89 aa).

The chain crosses the membrane as a helical span at residues 39 to 61 (FVCFWSIWFWTGDISFSLLSMLV).

It localises to the membrane. This is an uncharacterized protein from Saccharomyces cerevisiae (strain ATCC 204508 / S288c) (Baker's yeast).